The primary structure comprises 405 residues: Phosphopentomutase (405 aa).

Mn(2+) is bound by residues D10, D303, H308, D344, H345, and H356.

The protein belongs to the phosphopentomutase family. The cofactor is Mn(2+).

The protein resides in the cytoplasm. The enzyme catalyses 2-deoxy-alpha-D-ribose 1-phosphate = 2-deoxy-D-ribose 5-phosphate. It carries out the reaction alpha-D-ribose 1-phosphate = D-ribose 5-phosphate. Its pathway is carbohydrate degradation; 2-deoxy-D-ribose 1-phosphate degradation; D-glyceraldehyde 3-phosphate and acetaldehyde from 2-deoxy-alpha-D-ribose 1-phosphate: step 1/2. Its function is as follows. Isomerase that catalyzes the conversion of deoxy-ribose 1-phosphate (dRib-1-P) and ribose 1-phosphate (Rib-1-P) to deoxy-ribose 5-phosphate (dRib-5-P) and ribose 5-phosphate (Rib-5-P), respectively. This chain is Phosphopentomutase, found in Shewanella loihica (strain ATCC BAA-1088 / PV-4).